A 389-amino-acid chain; its full sequence is 8-amino-7-oxononanoate synthase (389 aa).

Residue R31 coordinates substrate. 109 to 110 is a pyridoxal 5'-phosphate binding site; the sequence is GY. H134 serves as a coordination point for substrate. Residues S180, 205–208, and 236–239 each bind pyridoxal 5'-phosphate; these read DEAH and TLSK. N6-(pyridoxal phosphate)lysine is present on K239. T349 serves as a coordination point for substrate.

It belongs to the class-II pyridoxal-phosphate-dependent aminotransferase family. BioF subfamily. As to quaternary structure, homodimer. Pyridoxal 5'-phosphate is required as a cofactor.

The catalysed reaction is 6-carboxyhexanoyl-[ACP] + L-alanine + H(+) = (8S)-8-amino-7-oxononanoate + holo-[ACP] + CO2. It participates in cofactor biosynthesis; biotin biosynthesis. Catalyzes the decarboxylative condensation of pimeloyl-[acyl-carrier protein] and L-alanine to produce 8-amino-7-oxononanoate (AON), [acyl-carrier protein], and carbon dioxide. This is 8-amino-7-oxononanoate synthase from Mycobacterium marinum (strain ATCC BAA-535 / M).